Reading from the N-terminus, the 378-residue chain is MLERPPMPSTKTTAAIEPRWRAGQRLFRLLAIGLLIVTIAYDTGANHWQQPLQTLTLPWLVSFALVAVLGMAVVPLLRRLKTGQIIREDGPQSHLQKSGTPTMGGIFFVPTGLGLAFLWTGFAQGKLSPTVGAIALLVLWYAAIGWWDDWQVLRRQSNKGLSARLRLLLEGIGAALFCAWLVASDPTATVVTAPWGWVWPLGMAFIPLAIFVPMAEGNALNLTDGLDGLAGGTGAIALLTLGIILSPYPDLQILAVVMSGACLGFLWHNHHPARVFMGDTGSLALGAVLAGIGLASHHLWELLIVSGLFFVESLSVIAQVLYYKATKGPDGVGKRLLRMAPLHHHFELGGWSELRIVRTFYGVVALLGLLCVLLQWLA.

11 helical membrane passes run 26 to 46, 57 to 77, 103 to 123, 127 to 147, 171 to 191, 195 to 215, 225 to 245, 247 to 267, 275 to 295, 302 to 322, and 356 to 376; these read LFRL…TGAN, LPWL…VPLL, MGGI…TGFA, LSPT…IGWW, GIGA…ATVV, WGWV…VPMA, GLDG…GIIL, PYPD…GFLW, VFMG…IGLA, LLIV…QVLY, and IVRT…LLQW.

Belongs to the glycosyltransferase 4 family. MraY subfamily. It depends on Mg(2+) as a cofactor.

It localises to the cell inner membrane. It catalyses the reaction UDP-N-acetyl-alpha-D-muramoyl-L-alanyl-gamma-D-glutamyl-meso-2,6-diaminopimeloyl-D-alanyl-D-alanine + di-trans,octa-cis-undecaprenyl phosphate = di-trans,octa-cis-undecaprenyl diphospho-N-acetyl-alpha-D-muramoyl-L-alanyl-D-glutamyl-meso-2,6-diaminopimeloyl-D-alanyl-D-alanine + UMP. It participates in cell wall biogenesis; peptidoglycan biosynthesis. Functionally, catalyzes the initial step of the lipid cycle reactions in the biosynthesis of the cell wall peptidoglycan: transfers peptidoglycan precursor phospho-MurNAc-pentapeptide from UDP-MurNAc-pentapeptide onto the lipid carrier undecaprenyl phosphate, yielding undecaprenyl-pyrophosphoryl-MurNAc-pentapeptide, known as lipid I. The chain is Phospho-N-acetylmuramoyl-pentapeptide-transferase from Thermosynechococcus vestitus (strain NIES-2133 / IAM M-273 / BP-1).